A 167-amino-acid polypeptide reads, in one-letter code: NADH-quinone oxidoreductase subunit B 2 (167 aa).

[4Fe-4S] cluster is bound by residues Cys-39, Cys-40, Cys-104, and Cys-134.

It belongs to the complex I 20 kDa subunit family. As to quaternary structure, NDH-1 is composed of 14 different subunits. Subunits NuoB, C, D, E, F, and G constitute the peripheral sector of the complex. It depends on [4Fe-4S] cluster as a cofactor.

Its subcellular location is the cell inner membrane. It carries out the reaction a quinone + NADH + 5 H(+)(in) = a quinol + NAD(+) + 4 H(+)(out). NDH-1 shuttles electrons from NADH, via FMN and iron-sulfur (Fe-S) centers, to quinones in the respiratory chain. Couples the redox reaction to proton translocation (for every two electrons transferred, four hydrogen ions are translocated across the cytoplasmic membrane), and thus conserves the redox energy in a proton gradient. The chain is NADH-quinone oxidoreductase subunit B 2 from Burkholderia mallei (strain NCTC 10247).